Consider the following 368-residue polypeptide: Chaperone protein DnaJ (368 aa).

Residues 5 to 65 form the J domain; sequence DYYEVLGLTK…QKKARYDQFG (61 aa). The segment at 125–207 adopts a CR-type zinc-finger fold; the sequence is GKETEIEIPK…CRGEGKVQKR (83 aa). The Zn(2+) site is built by Cys138, Cys141, Cys155, Cys158, Cys181, Cys184, Cys195, and Cys198. CXXCXGXG motif repeat units lie at residues 138–145, 155–162, 181–188, and 195–202; these read CETCHGSG, CSTCNGAG, CTTCHGTG, and CSTCRGEG.

It belongs to the DnaJ family. As to quaternary structure, homodimer. It depends on Zn(2+) as a cofactor.

Its subcellular location is the cytoplasm. Its function is as follows. Participates actively in the response to hyperosmotic and heat shock by preventing the aggregation of stress-denatured proteins and by disaggregating proteins, also in an autonomous, DnaK-independent fashion. Unfolded proteins bind initially to DnaJ; upon interaction with the DnaJ-bound protein, DnaK hydrolyzes its bound ATP, resulting in the formation of a stable complex. GrpE releases ADP from DnaK; ATP binding to DnaK triggers the release of the substrate protein, thus completing the reaction cycle. Several rounds of ATP-dependent interactions between DnaJ, DnaK and GrpE are required for fully efficient folding. Also involved, together with DnaK and GrpE, in the DNA replication of plasmids through activation of initiation proteins. The chain is Chaperone protein DnaJ from Lysinibacillus sphaericus (Bacillus sphaericus).